The chain runs to 213 residues: Glutamine amidotransferase-like class 1 domain-containing protein 1 (213 aa).

An N-terminal signal peptide occupies residues 1–20; the sequence is MTSKPTCLIVASAASAGVSA.

Belongs to the peptidase C56 family. Homotetramer. Component of the FERRY complex.

The protein localises to the secreted. It localises to the early endosome. Functionally, component of the FERRY complex (Five-subunit Endosomal Rab5 and RNA/ribosome intermediary). The FERRY complex directly interacts with mRNAs and RAB5A, and functions as a RAB5A effector involved in the localization and the distribution of specific mRNAs most likely by mediating their endosomal transport. The complex recruits mRNAs and ribosomes to early endosomes through direct mRNA-interaction. The protein is Glutamine amidotransferase-like class 1 domain-containing protein 1 of Danio rerio (Zebrafish).